Reading from the N-terminus, the 312-residue chain is tRNA U34 carboxymethyltransferase (312 aa).

Residues Lys88, Trp102, Lys107, Gly127, 149-151, 177-178, Met191, Tyr195, and Arg304 contribute to the carboxy-S-adenosyl-L-methionine site; these read DPS and LD.

It belongs to the class I-like SAM-binding methyltransferase superfamily. CmoB family. In terms of assembly, homotetramer.

The enzyme catalyses carboxy-S-adenosyl-L-methionine + 5-hydroxyuridine(34) in tRNA = 5-carboxymethoxyuridine(34) in tRNA + S-adenosyl-L-homocysteine + H(+). Its function is as follows. Catalyzes carboxymethyl transfer from carboxy-S-adenosyl-L-methionine (Cx-SAM) to 5-hydroxyuridine (ho5U) to form 5-carboxymethoxyuridine (cmo5U) at position 34 in tRNAs. The polypeptide is tRNA U34 carboxymethyltransferase (Dichelobacter nodosus (strain VCS1703A)).